Here is a 422-residue protein sequence, read N- to C-terminus: 3-phosphoshikimate 1-carboxyvinyltransferase (422 aa).

The 3-phosphoshikimate site is built by Lys20, Ser21, and Arg25. Lys20 lines the phosphoenolpyruvate pocket. Residues Gly91 and Arg119 each contribute to the phosphoenolpyruvate site. Thr163, Ser164, Gln165, Asp305, Gln328, and Lys332 together coordinate 3-phosphoshikimate. A phosphoenolpyruvate-binding site is contributed by Gln165. Residue Asp305 is the Proton acceptor of the active site. Arg336 and Arg377 together coordinate phosphoenolpyruvate.

It belongs to the EPSP synthase family. As to quaternary structure, monomer.

The protein localises to the cytoplasm. The enzyme catalyses 3-phosphoshikimate + phosphoenolpyruvate = 5-O-(1-carboxyvinyl)-3-phosphoshikimate + phosphate. The protein operates within metabolic intermediate biosynthesis; chorismate biosynthesis; chorismate from D-erythrose 4-phosphate and phosphoenolpyruvate: step 6/7. Catalyzes the transfer of the enolpyruvyl moiety of phosphoenolpyruvate (PEP) to the 5-hydroxyl of shikimate-3-phosphate (S3P) to produce enolpyruvyl shikimate-3-phosphate and inorganic phosphate. The protein is 3-phosphoshikimate 1-carboxyvinyltransferase of Ruminiclostridium cellulolyticum (strain ATCC 35319 / DSM 5812 / JCM 6584 / H10) (Clostridium cellulolyticum).